Consider the following 98-residue polypeptide: NADH-ubiquinone oxidoreductase chain 4L (98 aa).

A run of 3 helical transmembrane segments spans residues 2-22 (PSIS…MLMF), 29-49 (SLLC…LTIL), and 61-81 (ILLL…LVMV).

The protein belongs to the complex I subunit 4L family. As to quaternary structure, core subunit of respiratory chain NADH dehydrogenase (Complex I) which is composed of 45 different subunits.

Its subcellular location is the mitochondrion inner membrane. The catalysed reaction is a ubiquinone + NADH + 5 H(+)(in) = a ubiquinol + NAD(+) + 4 H(+)(out). Core subunit of the mitochondrial membrane respiratory chain NADH dehydrogenase (Complex I) which catalyzes electron transfer from NADH through the respiratory chain, using ubiquinone as an electron acceptor. Part of the enzyme membrane arm which is embedded in the lipid bilayer and involved in proton translocation. The protein is NADH-ubiquinone oxidoreductase chain 4L (MT-ND4L) of Microcebus simmonsi (Simmons's mouse lemur).